The chain runs to 275 residues: Fos-related antigen 1 (275 aa).

2 disordered regions span residues 1-33 and 71-115; these read MYRD…QTVQ and TYPQ…VRRE. Residues 7-33 are compositionally biased toward low complexity; it reads EPGPSSGAGSAYGRPAQPQQAQTQTVQ. The bZIP domain maps to 107–170; the sequence is EERRRVRRER…ERLELVLEAH (64 aa). Residues 109 to 129 form a basic motif region; that stretch reads RRRVRRERNKLAAAKCRNRRK. The interval 135–163 is leucine-zipper; the sequence is LQAETDKLEDEKSGLQREIEELQKQKERL. Residues 171-184 are compositionally biased toward basic and acidic residues; that stretch reads RPICKIPEEDKKDT. The tract at residues 171–275 is disordered; sequence RPICKIPEED…PLGSPTLLAL (105 aa). 3 stretches are compositionally biased toward low complexity: residues 185–194, 219–237, and 256–275; these read GGTSSTSGAG, LHTP…TPSL, and SSSS…LLAL. Phosphoserine is present on serine 269.

The protein belongs to the bZIP family. Fos subfamily. As to quaternary structure, heterodimer. Interacts with the BAF multiprotein chromatin-remodeling complex subunits SMARCB1 and SMARCD1. Interacts with ARID1A and JUN.

The protein localises to the nucleus. The chain is Fos-related antigen 1 (Fosl1) from Rattus norvegicus (Rat).